The chain runs to 544 residues: Chaperonin GroEL (544 aa).

ATP contacts are provided by residues Thr-30–Pro-33, Lys-51, Asp-87–Thr-91, Gly-415, Asp-481–Leu-483, and Asp-497.

It belongs to the chaperonin (HSP60) family. As to quaternary structure, forms a cylinder of 14 subunits composed of two heptameric rings stacked back-to-back. Interacts with the co-chaperonin GroES.

Its subcellular location is the cytoplasm. The catalysed reaction is ATP + H2O + a folded polypeptide = ADP + phosphate + an unfolded polypeptide.. Its function is as follows. Together with its co-chaperonin GroES, plays an essential role in assisting protein folding. The GroEL-GroES system forms a nano-cage that allows encapsulation of the non-native substrate proteins and provides a physical environment optimized to promote and accelerate protein folding. This Chlamydia trachomatis serovar D (strain ATCC VR-885 / DSM 19411 / UW-3/Cx) protein is Chaperonin GroEL.